We begin with the raw amino-acid sequence, 210 residues long: Protein GrpE (210 aa).

Disordered regions lie at residues 1-40 (MTDD…PDPI) and 191-210 (KGGP…EKDA). Residues 11–23 (DATAADAAADATA) show a composition bias toward low complexity.

The protein belongs to the GrpE family. As to quaternary structure, homodimer.

The protein localises to the cytoplasm. Functionally, participates actively in the response to hyperosmotic and heat shock by preventing the aggregation of stress-denatured proteins, in association with DnaK and GrpE. It is the nucleotide exchange factor for DnaK and may function as a thermosensor. Unfolded proteins bind initially to DnaJ; upon interaction with the DnaJ-bound protein, DnaK hydrolyzes its bound ATP, resulting in the formation of a stable complex. GrpE releases ADP from DnaK; ATP binding to DnaK triggers the release of the substrate protein, thus completing the reaction cycle. Several rounds of ATP-dependent interactions between DnaJ, DnaK and GrpE are required for fully efficient folding. In Rhizobium johnstonii (strain DSM 114642 / LMG 32736 / 3841) (Rhizobium leguminosarum bv. viciae), this protein is Protein GrpE.